The following is a 1128-amino-acid chain: MSSSRPTQCSSSSSRTRQSSRARILAQTTLDAELNAEYEEYGDSFDYSKLVEAQRTTGPEQQARSEKVIAYLHHIQRAKLIQPFGCLLALDEKTFNVIALSENAPEMLTTVSHAVPSVDDPPKLRIGTNVWSLFTDPGATALQKALGFADVSLLNPILVQCKTSGKPFYAIVHRATGCLVVDFEPVKPTEFPATAAGALQSYKLAAKAISKIQSLPGGSMEVLCNTVVKELFDLTGYDRVMAYKFHEDDHGEVFAEITKPGLEPYLGLHYPATDIPQAARFLFMKNKVRMICDCRARSIKIIEDESLHLDISLCGSTLRAPHSCHLQYMENMNSIASLVMAVVVNENEDDDEVGADQPAQQQKRKKLWGLLVCHHESPRYVPFPLRYACEFLAQVFAVHVNKEFELERQVREKSILRMQTMLSDMLLRESSPLSIVSGTPNIMDLVKCDGAALLYGGKVWRLQNAPTESQIRDIAFWLSDVHRDSTGLSTDSLHDAGYPGAAALGDMICGMAVAKINSKDILFWFRSHTAAEIRWGGAKHDPSDKDDSRRMHPRLSFKAFLEVVKMKSLPWNDYEMDAIHSLQLILRGTLNDDIKPTRAASLDNQVGDLKLDGLAELQAVTSEMVRLMETATVPILAVDSNGLVNGWNQKVAELTGLRVDEAIGRHILTVVEESSVPVVQRMLYLALQGKEEKEVKFEVKTHGSKRDDGPVILVVNACASRDLHDHVVGVCFVAQDMTVHKLVMDKFTRVEGDYKAIIHNPSPLIPPIFGADEFGWCSEWNAAMTKLTGWHRDEVINKMLLGEVFDSTNASCLVKNKDAFVSLCILINSALAGDETEKAPFSFFDRNGKYIECLLSVNRKVNADGVITGVFCFIQVPSHELQHALHVQQASQQNALTKLKAYSYMRHAINNPLSGMLYSRKALKNTGLNEEQMKEVNVADSCHRQLNKILSDLDQDSVMNKSSCLDLEMVEFVLQDVFVAAVSQVLITCQGKGIRVSCNLPERYMKQTVYGDGVRLQQILSDFLFVSVKFSPVGGSVEISCSLTKNSIGENLHLIDLELRIKHQGKGVPADLLSQMYEDDNKEQSDEGMSLAVSRNLLRLMNGDVRHMREAGMSTFILSVELASAPAK.

A compositionally biased stretch (low complexity) spans M1 to R21. The segment at M1–I24 is disordered. A GAF domain is found at S219–F404. C324 serves as a coordination point for phytochromobilin. 2 consecutive PAS domains span residues V620–K690 and V750–D834. One can recognise a Histidine kinase domain in the interval Y904 to S1124.

Belongs to the phytochrome family. Homodimer. In terms of processing, contains one covalently linked phytochromobilin chromophore.

In terms of biological role, regulatory photoreceptor which exists in two forms that are reversibly interconvertible by light: the Pr form that absorbs maximally in the red region of the spectrum and the Pfr form that absorbs maximally in the far-red region. Photoconversion of Pr to Pfr induces an array of morphogenic responses, whereas reconversion of Pfr to Pr cancels the induction of those responses. Pfr controls the expression of a number of nuclear genes including those encoding the small subunit of ribulose-bisphosphate carboxylase, chlorophyll A/B binding protein, protochlorophyllide reductase, rRNA, etc. It also controls the expression of its own gene(s) in a negative feedback fashion. In Oryza sativa subsp. indica (Rice), this protein is Phytochrome A (PHYA).